The following is a 149-amino-acid chain: Transcriptional repressor NrdR (149 aa).

A zinc finger spans residues 3–34; the sequence is CPFCSTEETKVIDSRLVSEGYQVRRRRECGNC. Positions 49-139 constitute an ATP-cone domain; that stretch reads PKVIKNDGTR…VYLSFDDINQ (91 aa).

This sequence belongs to the NrdR family. Requires Zn(2+) as cofactor.

Functionally, negatively regulates transcription of bacterial ribonucleotide reductase nrd genes and operons by binding to NrdR-boxes. The chain is Transcriptional repressor NrdR from Pasteurella multocida (strain Pm70).